A 437-amino-acid chain; its full sequence is 3-phosphoshikimate 1-carboxyvinyltransferase (437 aa).

3-phosphoshikimate is bound by residues Lys22, Ser23, and Arg27. Lys22 serves as a coordination point for phosphoenolpyruvate. Phosphoenolpyruvate is bound by residues Gly96 and Arg125. 3-phosphoshikimate-binding residues include Ser170, Gln172, Asp323, and Lys350. Gln172 lines the phosphoenolpyruvate pocket. Asp323 acts as the Proton acceptor in catalysis. The phosphoenolpyruvate site is built by Arg354 and Arg396.

This sequence belongs to the EPSP synthase family. As to quaternary structure, monomer.

It is found in the cytoplasm. It carries out the reaction 3-phosphoshikimate + phosphoenolpyruvate = 5-O-(1-carboxyvinyl)-3-phosphoshikimate + phosphate. It participates in metabolic intermediate biosynthesis; chorismate biosynthesis; chorismate from D-erythrose 4-phosphate and phosphoenolpyruvate: step 6/7. Its function is as follows. Catalyzes the transfer of the enolpyruvyl moiety of phosphoenolpyruvate (PEP) to the 5-hydroxyl of shikimate-3-phosphate (S3P) to produce enolpyruvyl shikimate-3-phosphate and inorganic phosphate. This Synechococcus sp. (strain RCC307) protein is 3-phosphoshikimate 1-carboxyvinyltransferase.